Consider the following 184-residue polypeptide: MAKYNEKELADTSKFLSFVLRHKPEAIGIVLDREGWADIDKLILCAQKAGKRLTRALLDTVVATSDKKRFSYSSDGRCIRAVQGHSTSQVAISFAEKTPPQFLYHGTASRFLDEIKKQGLIAGERHYVHLSADEATARKVGARHGSPVILTVKAQEMAKRGLPFWQAENGVWLTSTVAVEFLEW.

Belongs to the KptA/TPT1 family.

Functionally, removes the 2'-phosphate from RNA via an intermediate in which the phosphate is ADP-ribosylated by NAD followed by a presumed transesterification to release the RNA and generate ADP-ribose 1''-2''-cyclic phosphate (APPR&gt;P). May function as an ADP-ribosylase. This Escherichia coli O139:H28 (strain E24377A / ETEC) protein is Probable RNA 2'-phosphotransferase.